A 149-amino-acid chain; its full sequence is UPF0756 membrane protein BBR47_32760 (149 aa).

Helical transmembrane passes span 3–23, 48–68, 85–105, 106–126, and 128–148; these read WISIILLVLLALGVIGNNATV, HGLQLGIIILTIGIMTPLASG, LLAVAVGMFVAYLAGKGTVLM, SQNPLIVTGLLLGTIAGVTFF, and GVAVGPLIAAGILAFILQFLP.

It belongs to the UPF0756 family.

It is found in the cell membrane. The protein is UPF0756 membrane protein BBR47_32760 of Brevibacillus brevis (strain 47 / JCM 6285 / NBRC 100599).